The following is a 217-amino-acid chain: Large ribosomal subunit protein bL25 (217 aa).

Residues 178-217 are disordered; sequence VVAPTEEPTEEEIEAMEGEQQTEEPEVVGESKEDEEKTEE. The span at 184-205 shows a compositional bias: acidic residues; the sequence is EPTEEEIEAMEGEQQTEEPEVV. Positions 206–217 are enriched in basic and acidic residues; it reads GESKEDEEKTEE.

Belongs to the bacterial ribosomal protein bL25 family. CTC subfamily. As to quaternary structure, part of the 50S ribosomal subunit; part of the 5S rRNA/L5/L18/L25 subcomplex. Contacts the 5S rRNA. Binds to the 5S rRNA independently of L5 and L18.

In terms of biological role, this is one of the proteins that binds to the 5S RNA in the ribosome where it forms part of the central protuberance. The polypeptide is Large ribosomal subunit protein bL25 (Staphylococcus aureus (strain MRSA252)).